The following is a 380-amino-acid chain: Glucose-1-phosphate adenylyltransferase (380 aa).

Alpha-D-glucose 1-phosphate is bound by residues Gly164, Glu179–Lys180, and Ser190.

Belongs to the bacterial/plant glucose-1-phosphate adenylyltransferase family. In terms of assembly, homotetramer.

It catalyses the reaction alpha-D-glucose 1-phosphate + ATP + H(+) = ADP-alpha-D-glucose + diphosphate. Its pathway is glycan biosynthesis; glycogen biosynthesis. Involved in the biosynthesis of ADP-glucose, a building block required for the elongation reactions to produce glycogen. Catalyzes the reaction between ATP and alpha-D-glucose 1-phosphate (G1P) to produce pyrophosphate and ADP-Glc. In Lactococcus lactis subsp. cremoris (strain SK11), this protein is Glucose-1-phosphate adenylyltransferase.